Here is a 238-residue protein sequence, read N- to C-terminus: Ribosomal RNA small subunit methyltransferase G (238 aa).

S-adenosyl-L-methionine is bound by residues glycine 77, phenylalanine 82, 128–129 (AE), and arginine 147.

This sequence belongs to the methyltransferase superfamily. RNA methyltransferase RsmG family.

The protein resides in the cytoplasm. In terms of biological role, specifically methylates the N7 position of guanine in position 535 of 16S rRNA. The polypeptide is Ribosomal RNA small subunit methyltransferase G (Geobacillus sp. (strain WCH70)).